The sequence spans 279 residues: Pantothenate synthetase (279 aa).

Met27 to His34 provides a ligand contact to ATP. The Proton donor role is filled by His34. Gln58 lines the (R)-pantoate pocket. Gln58 serves as a coordination point for beta-alanine. Gly144–Asp147 serves as a coordination point for ATP. Gln150 provides a ligand contact to (R)-pantoate. ATP contacts are provided by residues Val173 and Met181–Arg184.

Belongs to the pantothenate synthetase family. In terms of assembly, homodimer.

It is found in the cytoplasm. It catalyses the reaction (R)-pantoate + beta-alanine + ATP = (R)-pantothenate + AMP + diphosphate + H(+). Its pathway is cofactor biosynthesis; (R)-pantothenate biosynthesis; (R)-pantothenate from (R)-pantoate and beta-alanine: step 1/1. Its function is as follows. Catalyzes the condensation of pantoate with beta-alanine in an ATP-dependent reaction via a pantoyl-adenylate intermediate. The sequence is that of Pantothenate synthetase from Geobacter sp. (strain M21).